A 92-amino-acid polypeptide reads, in one-letter code: Small ribosomal subunit protein uS19c (92 aa).

It belongs to the universal ribosomal protein uS19 family.

Its subcellular location is the plastid. It is found in the chloroplast. Its function is as follows. Protein S19 forms a complex with S13 that binds strongly to the 16S ribosomal RNA. The chain is Small ribosomal subunit protein uS19c from Gossypium barbadense (Sea Island cotton).